Here is a 1279-residue protein sequence, read N- to C-terminus: ATP-dependent helicase/nuclease subunit A (1279 aa).

The UvrD-like helicase ATP-binding domain maps to 4-499 (TKWTDEQRQA…VKLFKNFRSR (496 aa)). Residue 25–32 (AGAGAGKT) coordinates ATP. Residues 526-853 (EEALKVGASY…RIMSIHKSKG (328 aa)) enclose the UvrD-like helicase C-terminal domain.

The protein belongs to the helicase family. AddA subfamily. In terms of assembly, heterodimer of AddA and AddB/RexB. Mg(2+) is required as a cofactor.

It catalyses the reaction Couples ATP hydrolysis with the unwinding of duplex DNA by translocating in the 3'-5' direction.. It carries out the reaction ATP + H2O = ADP + phosphate + H(+). Functionally, the heterodimer acts as both an ATP-dependent DNA helicase and an ATP-dependent, dual-direction single-stranded exonuclease. Recognizes the chi site generating a DNA molecule suitable for the initiation of homologous recombination. The AddA nuclease domain is required for chi fragment generation; this subunit has the helicase and 3' -&gt; 5' nuclease activities. This chain is ATP-dependent helicase/nuclease subunit A, found in Clostridium botulinum (strain Hall / ATCC 3502 / NCTC 13319 / Type A).